The primary structure comprises 311 residues: Cell division protein ZipA (311 aa).

Residues 1 to 6 (MENLQL) lie on the Periplasmic side of the membrane. A helical transmembrane segment spans residues 7–27 (VLFVLGAIAIIAVLVHGFWSI). Over 28 to 311 (RKQQPKSLKE…YLQRIRAQLD (284 aa)) the chain is Cytoplasmic. The tract at residues 46–114 (DQASVRDSQG…FALSDEPVQR (69 aa)) is disordered. 2 stretches are compositionally biased toward basic and acidic residues: residues 62 to 83 (GEVRVRKEVPATDRQEKEDKPV) and 94 to 103 (RDVEDSRHEQ).

It belongs to the ZipA family. In terms of assembly, interacts with FtsZ via their C-terminal domains.

It is found in the cell inner membrane. Functionally, essential cell division protein that stabilizes the FtsZ protofilaments by cross-linking them and that serves as a cytoplasmic membrane anchor for the Z ring. Also required for the recruitment to the septal ring of downstream cell division proteins. The polypeptide is Cell division protein ZipA (Shewanella woodyi (strain ATCC 51908 / MS32)).